The primary structure comprises 95 residues: Aspartyl/glutamyl-tRNA(Asn/Gln) amidotransferase subunit C (95 aa).

Belongs to the GatC family. In terms of assembly, heterotrimer of A, B and C subunits.

It catalyses the reaction L-glutamyl-tRNA(Gln) + L-glutamine + ATP + H2O = L-glutaminyl-tRNA(Gln) + L-glutamate + ADP + phosphate + H(+). The catalysed reaction is L-aspartyl-tRNA(Asn) + L-glutamine + ATP + H2O = L-asparaginyl-tRNA(Asn) + L-glutamate + ADP + phosphate + 2 H(+). Allows the formation of correctly charged Asn-tRNA(Asn) or Gln-tRNA(Gln) through the transamidation of misacylated Asp-tRNA(Asn) or Glu-tRNA(Gln) in organisms which lack either or both of asparaginyl-tRNA or glutaminyl-tRNA synthetases. The reaction takes place in the presence of glutamine and ATP through an activated phospho-Asp-tRNA(Asn) or phospho-Glu-tRNA(Gln). The protein is Aspartyl/glutamyl-tRNA(Asn/Gln) amidotransferase subunit C of Clostridium botulinum (strain Loch Maree / Type A3).